We begin with the raw amino-acid sequence, 334 residues long: Adenine deaminase (334 aa).

Histidine 14, histidine 16, and histidine 194 together coordinate Zn(2+). The active-site Proton donor is glutamate 197. Aspartate 275 contacts Zn(2+). Aspartate 276 serves as a coordination point for substrate.

The protein belongs to the metallo-dependent hydrolases superfamily. Adenosine and AMP deaminases family. Adenine deaminase type 2 subfamily. Zn(2+) is required as a cofactor.

The catalysed reaction is adenine + H2O + H(+) = hypoxanthine + NH4(+). Functionally, catalyzes the hydrolytic deamination of adenine to hypoxanthine. Plays an important role in the purine salvage pathway and in nitrogen catabolism. This is Adenine deaminase from Hahella chejuensis (strain KCTC 2396).